The chain runs to 400 residues: GTPase Obg (400 aa).

One can recognise an Obg domain in the interval 1 to 159 (MKFVDEVQIR…RTLKLELLLL (159 aa)). The OBG-type G domain occupies 160-333 (ADVGMLGLPN…VCYDILDLLD (174 aa)). Residues 166–173 (GLPNAGKS), 191–195 (FTTLV), 213–216 (DIPG), 283–286 (NKMD), and 314–316 (SAI) each bind GTP. Residues Ser173 and Thr193 each coordinate Mg(2+).

It belongs to the TRAFAC class OBG-HflX-like GTPase superfamily. OBG GTPase family. Monomer. Mg(2+) is required as a cofactor.

The protein localises to the cytoplasm. In terms of biological role, an essential GTPase which binds GTP, GDP and possibly (p)ppGpp with moderate affinity, with high nucleotide exchange rates and a fairly low GTP hydrolysis rate. Plays a role in control of the cell cycle, stress response, ribosome biogenesis and in those bacteria that undergo differentiation, in morphogenesis control. This chain is GTPase Obg, found in Aeromonas salmonicida (strain A449).